We begin with the raw amino-acid sequence, 300 residues long: 1D-myo-inositol 2-acetamido-2-deoxy-alpha-D-glucopyranoside deacetylase (300 aa).

Positions 13, 16, and 147 each coordinate Zn(2+).

This sequence belongs to the MshB deacetylase family. Zn(2+) is required as a cofactor.

It catalyses the reaction 1D-myo-inositol 2-acetamido-2-deoxy-alpha-D-glucopyranoside + H2O = 1D-myo-inositol 2-amino-2-deoxy-alpha-D-glucopyranoside + acetate. Functionally, catalyzes the deacetylation of 1D-myo-inositol 2-acetamido-2-deoxy-alpha-D-glucopyranoside (GlcNAc-Ins) in the mycothiol biosynthesis pathway. The polypeptide is 1D-myo-inositol 2-acetamido-2-deoxy-alpha-D-glucopyranoside deacetylase (Mycolicibacterium paratuberculosis (strain ATCC BAA-968 / K-10) (Mycobacterium paratuberculosis)).